A 223-amino-acid chain; its full sequence is Endonuclease V (223 aa).

2 residues coordinate Mg(2+): D35 and D103.

The protein belongs to the endonuclease V family. Mg(2+) is required as a cofactor.

Its subcellular location is the cytoplasm. The catalysed reaction is Endonucleolytic cleavage at apurinic or apyrimidinic sites to products with a 5'-phosphate.. DNA repair enzyme involved in the repair of deaminated bases. Selectively cleaves double-stranded DNA at the second phosphodiester bond 3' to a deoxyinosine leaving behind the intact lesion on the nicked DNA. The sequence is that of Endonuclease V from Salmonella agona (strain SL483).